The sequence spans 315 residues: L-lactate dehydrogenase (315 aa).

NAD(+) contacts are provided by Val14, Asp35, and Tyr66. Substrate contacts are provided by residues Gln83, Arg89, and 121-124 (NPVD). NAD(+)-binding positions include 119 to 121 (VAN) and Ser144. 149 to 152 (DTAR) is a binding site for substrate. Residue His176 is the Proton acceptor of the active site. Tyr221 is subject to Phosphotyrosine. Thr230 provides a ligand contact to substrate.

It belongs to the LDH/MDH superfamily. LDH family. In terms of assembly, homotetramer.

It is found in the cytoplasm. It catalyses the reaction (S)-lactate + NAD(+) = pyruvate + NADH + H(+). It participates in fermentation; pyruvate fermentation to lactate; (S)-lactate from pyruvate: step 1/1. Functionally, catalyzes the conversion of lactate to pyruvate. The protein is L-lactate dehydrogenase of Mesomycoplasma hyopneumoniae (strain 7448) (Mycoplasma hyopneumoniae).